Consider the following 151-residue polypeptide: Copper transporter 2 (151 aa).

2 consecutive transmembrane segments (helical) span residues 42–62 and 97–117; these read GARG…AVLL and VAYL…LAIV.

Belongs to the copper transporter (Ctr) (TC 1.A.56) family. SLC31A subfamily. In terms of assembly, self-interacts. Interacts with SWEET11 and COPT1.

It localises to the cell membrane. Its function is as follows. Involved in the transport of copper, in cooperation with SWEET11 and COPT1. Contributes to the removal of copper (Cu) from xylem, and thus to the sensitivity toward bacterial pathogens such as X.oryzae pv. oryzae (Xoo). This Oryza sativa subsp. japonica (Rice) protein is Copper transporter 2 (COPT2).